The chain runs to 559 residues: WD repeat-containing protein JIP5 (559 aa).

WD repeat units follow at residues 26–67 (QYSD…NYLQ), 77–116 (ADGK…WKTK), 117–156 (RHKG…VVKK), 162–201 (DNGG…ETNR), 207–247 (NGDD…ESDF), 265–306 (DQED…LEDQ), 313–347 (AKEE…DIKK), 354–394 (RNHS…SEEE), and 428–470 (DSDG…SDDE). 2 disordered regions span residues 386–500 (SRNE…LIGL) and 515–559 (EESE…FEGL). Over residues 391–417 (SEEEDDEESESFSDSDSDSDSDSDSDS) the composition is skewed to acidic residues. Over residues 418-428 (DSDRDRDRDSD) the composition is skewed to basic and acidic residues. The segment covering 482-494 (DMDDIDEGSDSSE) has biased composition (acidic residues). Residues 520-534 (EGEKLQKKRKNEPSK) show a composition bias toward basic and acidic residues. Over residues 535–544 (KNTKNLKKVK) the composition is skewed to basic residues.

This sequence belongs to the WD repeat WDR55 family.

Its subcellular location is the nucleus. The protein localises to the nucleolus. The chain is WD repeat-containing protein JIP5 (JIP5) from Vanderwaltozyma polyspora (strain ATCC 22028 / DSM 70294 / BCRC 21397 / CBS 2163 / NBRC 10782 / NRRL Y-8283 / UCD 57-17) (Kluyveromyces polysporus).